The chain runs to 301 residues: Lufaxin (301 aa).

Residues 1 to 23 (MNSINFLSIVGLISFGFIVAVKC) form the signal peptide. Cystine bridges form between C52/C60, C78/C137, C102/C112, and C258/C265. An N-linked (GlcNAc...) asparagine glycan is attached at N262.

In terms of assembly, interacts with factor Xa. Associates with complement proconvertase C3b-B complex. Expressed in salivary glands.

The protein resides in the secreted. Functionally, sand fly salivary protein with antithrombotic, and anti-complement (alternative pathway) activities. Is a slow, tight, non-competitive, and reversible inhibitor of factor Xa (FXa, F10). Is specific for FXa (Kd=3.86 nM) and does not interact with non-activated FX, or all other enzymes tested. In addition, it blocks prothrombinase and increases both prothrombin time and activated partial thromboplastin time. It also prevents protease-activated receptor 2 (F2RL1, PAR2) activation by FXa. In vivo, it abrogates edema formation triggered by injection of FXa in the paw of mice. Moreover, it prevents FeCl(3)-induced carotid artery thrombus formation and prolongs activated partial thromboplastin time ex vivo, implying that it works as an anticoagulant in vivo. It also inhibits the early steps of the alternative pathway of complement by direct binding to the proconvertase C3b-B complex, by inhibiting activation of factor B and consequently the formation of the C3 convertase. This is Lufaxin from Lutzomyia longipalpis (Sand fly).